We begin with the raw amino-acid sequence, 187 residues long: Peptide deformylase (187 aa).

C94 and H136 together coordinate Fe cation. Residue E137 is part of the active site. H140 contacts Fe cation.

Belongs to the polypeptide deformylase family. It depends on Fe(2+) as a cofactor.

It catalyses the reaction N-terminal N-formyl-L-methionyl-[peptide] + H2O = N-terminal L-methionyl-[peptide] + formate. In terms of biological role, removes the formyl group from the N-terminal Met of newly synthesized proteins. Requires at least a dipeptide for an efficient rate of reaction. N-terminal L-methionine is a prerequisite for activity but the enzyme has broad specificity at other positions. The protein is Peptide deformylase of Chlorobaculum tepidum (strain ATCC 49652 / DSM 12025 / NBRC 103806 / TLS) (Chlorobium tepidum).